We begin with the raw amino-acid sequence, 495 residues long: MSQQFQASSGTGSASLREFKTEHEDLREDLPYSTLRTLFGITLDKDASQALNIALLLYGHNYPQQVVPPERNYAELDAQLESVVLEDHTAESTMEPGVSATVTEQLEEKSDKSSDGDGTSKRLTRSLKSVENETEEDHEEKEDEAPQSSRRESTRLKRKLLESQKTVQTTGNSSRASSKSQEKEVPGTKSQCAPKIRTTPEQSKAATKRQSSTTVRASSTCGSSVSSTSTVSSPDYTAKKGRATETPKLEELAPKKQSSATPKPGGEVCVWDGVQIGDLSAQMNAQIGDDEELDTVDIARRILSELKERCIPQTALAEKILARSQGTLSDLLRMPKPWSVMKNGRATFQRMSNWLGLDPDVRRALCFLPKEDVARITGLDEPTPAKRKKTVKVIRLTFTETQLKSLQKSFQQNHRPTREMRQKLSATLELDFSTVGNFFMNSRRRLRIDQQISRSSRSTGNGADTEDELDEEDVVVENVIADATDASNQPGPSHL.

Positions Met-1–Ala-14 are enriched in polar residues. Disordered stretches follow at residues Met-1–Glu-24 and Thr-89–Glu-267. Residues Leu-106–Ser-120 show a composition bias toward basic and acidic residues. Over residues Asn-132–Ala-145 the composition is skewed to acidic residues. A compositionally biased stretch (basic and acidic residues) spans Ser-149–Glu-162. Polar residues-rich tracts occupy residues Ser-163–Lys-179 and Thr-199–Ala-217. A compositionally biased stretch (low complexity) spans Ser-218–Ser-233. The segment covering Arg-242–Pro-254 has biased composition (basic and acidic residues). Residues Asn-284 to Lys-370 constitute a DNA-binding region (CUT). A DNA-binding region (homeobox) is located at residues Lys-389–Asp-449. Residues Gln-450–Asp-473 form a disordered region. A compositionally biased stretch (acidic residues) spans Asp-464–Asp-473.

The protein belongs to the CUT homeobox family.

The protein resides in the nucleus. In terms of biological role, probable DNA-binding regulatory protein involved in cell-fate specification. The sequence is that of Homeobox protein ceh-21 (ceh-21) from Caenorhabditis elegans.